Here is a 55-residue protein sequence, read N- to C-terminus: Large ribosomal subunit protein bL33 (55 aa).

This sequence belongs to the bacterial ribosomal protein bL33 family.

The sequence is that of Large ribosomal subunit protein bL33 from Dehalococcoides mccartyi (strain ATCC BAA-2100 / JCM 16839 / KCTC 5957 / BAV1).